Consider the following 647-residue polypeptide: TNFAIP3-interacting protein 1 (647 aa).

Residues 39 to 72 are a coiled coil; the sequence is MQGIKMLGELLEESQMEASRLRQKAEELVKDSEL. Residues 61 to 71 are compositionally biased toward basic and acidic residues; sequence QKAEELVKDSE. Positions 61 to 168 are disordered; that stretch reads QKAEELVKDS…DLGPPPPEDS (108 aa). Residue S77 is modified to Phosphoserine. Residues 95–425 form an interaction with Nef region; that stretch reads TKVQVHPATS…SPLTRQREYQ (331 aa). The span at 102–115 shows a compositional bias: low complexity; that stretch reads ATSTAATTTATATT. A compositionally biased stretch (polar residues) spans 143–155; that stretch reads EEQNSPETGSHPT. Residues 209-270 are a coiled coil; the sequence is SKVHKNEQRT…KKLLMNSSCK (62 aa). S297, S416, and S455 each carry phosphoserine. A coiled-coil region spans residues 311-551; it reads AAEKKVKLLE…KASGERYHME (241 aa). A required for inhibitory activity of TNF-induced NF-kappa-B activation region spans residues 444 to 601; sequence ASPSSPPAAF…MEHPPPHPNS (158 aa). A ubiquitin-binding domain (UBD) region spans residues 465-523; the sequence is KQELVTQNELLKQQVKIFEEDFQRERSDRERMNEEKEELKKQVEKLQAQVTLTNAQLKT. The Nuclear localization signal signature appears at 537–543; the sequence is QKRKAKA. Y565 bears the Phosphotyrosine mark. An Asymmetric dimethylarginine modification is found at R584. Asymmetric dimethylarginine; alternate is present on R612. At R612 the chain carries Omega-N-methylarginine; alternate. The disordered stretch occupies residues 613–647; that stretch reads PPCAGIRNQSSQVMDPPPDRPAEPESADNDCDGPQ. Over residues 637–647 the composition is skewed to acidic residues; sequence ESADNDCDGPQ. The residue at position 638 (S638) is a Phosphoserine.

In terms of assembly, interacts with TNFAIP3 and IKBKG (polyubiquitinated); facilitates TNFAIP3-mediated de-ubiquitination of NEMO/IKBKG. Interacts with polyubiquitin. Interacts with MAPK1, SELPLG and PIK3CD. Interacts with IRAK1 (polyubiquitinated). Interacts with MYD88; the interaction is indicative for participation in an activated TLR-signaling complex. Interacts with TAX1BP1. Post-translationally, phosphorylation at Tyr-565 by SRC-family kinases recruits phosphoinositide-3-kinase (PI3K) PIK3CD:p85 heterodimer which results in integrin activation and leukocyte adhesion to activated endothelium during inflammation. As to expression, ubiquitous. Abundant in heart and skeletal muscle and expressed at lower levels in thymus, liver, kidney, brain and intestinal tract.

The protein resides in the cytoplasm. It is found in the nucleus. Its function is as follows. Inhibits NF-kappa-B activation and TNF-induced NF-kappa-B-dependent gene expression by regulating TAX1BP1 and A20/TNFAIP3-mediated deubiquitination of IKBKG; proposed to link A20/TNFAIP3 to ubiquitinated IKBKG. Involved in regulation of EGF-induced ERK1/ERK2 signaling pathway; blocks MAPK3/MAPK1 nuclear translocation and MAPK1-dependent transcription. Increases cell surface CD4(T4) antigen expression. Involved in the anti-inflammatory response of macrophages and positively regulates TLR-induced activation of CEBPB. Involved in the prevention of autoimmunity; this function implicates binding to polyubiquitin. Involved in leukocyte integrin activation during inflammation; this function is mediated by association with SELPLG and dependent on phosphorylation by SRC-family kinases. The sequence is that of TNFAIP3-interacting protein 1 (Tnip1) from Mus musculus (Mouse).